We begin with the raw amino-acid sequence, 517 residues long: Ascochitine biosynthesis cluster MFS transporter (517 aa).

Positions 1 to 12 are enriched in basic and acidic residues; it reads MSPDSRDPEAQR. Positions 1 to 45 are disordered; that stretch reads MSPDSRDPEAQRDVGLTKNTSSVNIPLESVKTDKTSNASPIMGPG. An N-linked (GlcNAc...) asparagine glycan is attached at N19. The next 12 helical transmembrane spans lie at 75–95, 111–131, 141–161, 172–192, 204–224, 232–252, 308–328, 347–367, 390–410, 421–441, 457–475, and 485–505; these read WVITWLLSFLNVWVTFSSTIF, VVMTLGVSLTVLGFAVGPLIW, LTPFYFGYAVFCIFQIPVGVA, FFIGFFGTSAMAVTPGVLADI, VYAAAAFIGPIFGPIVGGFVV, WTAWITLILASAFGLAALVFV, ILLLVTLYISLVYGVLYLFFV, ALPLLAVMLGTLAGCLTILFV, LMMVGSVSLPIGLFWFGWTSS, AGFPIGIGLALIWVQGLSFLI, LIRSAVGAAFPLFGAPMYH, and LLGFLSVAMIPIPVAFYYYGP.

This sequence belongs to the major facilitator superfamily. CAR1 family.

Its subcellular location is the membrane. Its function is as follows. MFS transporter; part of the gene cluster that mediates the biosynthesis the mycotoxin ascochitine, an o-quinone methide that plays a possible protective role against other microbial competitors in nature and is considered to be important for pathogenicity of legume-associated Didymella species. In Didymella fabae (Leaf and pod spot disease fungus), this protein is Ascochitine biosynthesis cluster MFS transporter.